The chain runs to 277 residues: Phosphatidylglycerol--prolipoprotein diacylglyceryl transferase (277 aa).

Transmembrane regions (helical) follow at residues I18–A38, I51–Y71, I89–I109, and I116–G136. R137 contributes to the a 1,2-diacyl-sn-glycero-3-phospho-(1'-sn-glycerol) binding site. 3 helical membrane passes run Q177–I197, G205–M225, and F235–Y255.

This sequence belongs to the Lgt family.

The protein localises to the cell membrane. It catalyses the reaction L-cysteinyl-[prolipoprotein] + a 1,2-diacyl-sn-glycero-3-phospho-(1'-sn-glycerol) = an S-1,2-diacyl-sn-glyceryl-L-cysteinyl-[prolipoprotein] + sn-glycerol 1-phosphate + H(+). It participates in protein modification; lipoprotein biosynthesis (diacylglyceryl transfer). Its function is as follows. Catalyzes the transfer of the diacylglyceryl group from phosphatidylglycerol to the sulfhydryl group of the N-terminal cysteine of a prolipoprotein, the first step in the formation of mature lipoproteins. This chain is Phosphatidylglycerol--prolipoprotein diacylglyceryl transferase, found in Listeria monocytogenes serotype 4b (strain CLIP80459).